Consider the following 726-residue polypeptide: Endo-1,4-beta-xylanase/feruloyl esterase (726 aa).

Positions 1–19 are cleaved as a signal peptide; the sequence is MKKLLVALSLIAGSLTASA. The 343-residue stretch at 27–369 folds into the GH10 domain; it reads YAAGPGLKDA…KRSLQIIRDF (343 aa). The Proton donor; for xylanase activity role is filled by glutamate 161. Residue glutamate 280 is the Nucleophile; for xylanase activity of the active site. Residues 370 to 726 form a feruloyl esterase region; sequence DAAMDNRKPK…LEKMAQSLFK (357 aa). Serine 629 functions as the Nucleophile; for esterase activity in the catalytic mechanism.

It in the N-terminal section; belongs to the glycosyl hydrolase 10 (cellulase F) family. As to quaternary structure, monomer or homodimer.

The catalysed reaction is Endohydrolysis of (1-&gt;4)-beta-D-xylosidic linkages in xylans.. It carries out the reaction feruloyl-polysaccharide + H2O = ferulate + polysaccharide.. The protein operates within glycan degradation; xylan degradation. Functionally, involved in degradation of plant cell wall polysaccharides. Has endo-xylanase activity towards substrates such as oat spelt xylan (OSX), acetylated xylo-oligosaccharides and acetylated xylan, producing primarily xylobiose; cannot hydrolyze xylobiose to xylose. Also has feruloyl esterase activity, releasing ferulic acid from methylferulate, and from the more natural substrates wheat bran, corn fiber, and XOS(FA,Ac), a corn fiber-derived substrate enriched in O-acetyl and ferulic acid esters. Exhibits negligible acetyl esterase activity on sugar acetates. Acts synergistically with Xyl3A to increase the release of xylose from xylan. Does not possess endoglucanase or mannanase activities since it is not able to hydrolyze carboxymethyl cellulose and locust bean gum. The sequence is that of Endo-1,4-beta-xylanase/feruloyl esterase from Xylanibacter ruminicola (strain ATCC 19189 / DSM 19721 / CIP 105475 / JCM 8958 / 23) (Prevotella ruminicola).